The primary structure comprises 85 residues: Small ribosomal subunit protein bS20 (85 aa).

The disordered stretch occupies residues 1-24; it reads MANIKSAIKRAKLSEERRSHNASI.

This sequence belongs to the bacterial ribosomal protein bS20 family.

In terms of biological role, binds directly to 16S ribosomal RNA. This Bacillus mycoides (strain KBAB4) (Bacillus weihenstephanensis) protein is Small ribosomal subunit protein bS20.